The sequence spans 955 residues: Alpha-1,4 glucan phosphorylase L isozyme, chloroplastic/amyloplastic (955 aa).

The N-terminal 43 residues, 1 to 43 (MSRLSGITPRARDDRSQFQNPRLEIAVPDRTAGLQRTKRTLLV), are a transit peptide targeting the chloroplast. Residues 522–550 (KVVTESEKDELEEKDTELEKDEDPVPAPI) form a disordered region. Over residues 528–545 (EKDELEEKDTELEKDEDP) the composition is skewed to acidic residues. Lys-801 bears the N6-(pyridoxal phosphate)lysine mark.

The protein belongs to the glycogen phosphorylase family. Pyridoxal 5'-phosphate serves as cofactor.

It is found in the plastid. The protein resides in the chloroplast. Its subcellular location is the amyloplast. It catalyses the reaction [(1-&gt;4)-alpha-D-glucosyl](n) + phosphate = [(1-&gt;4)-alpha-D-glucosyl](n-1) + alpha-D-glucose 1-phosphate. Functionally, phosphorylase is an important allosteric enzyme in carbohydrate metabolism. Enzymes from different sources differ in their regulatory mechanisms and in their natural substrates. However, all known phosphorylases share catalytic and structural properties. The chain is Alpha-1,4 glucan phosphorylase L isozyme, chloroplastic/amyloplastic from Ipomoea batatas (Sweet potato).